The chain runs to 112 residues: Cytochrome c3 (112 aa).

The heme c site is built by histidine 26, histidine 29, cysteine 34, cysteine 37, histidine 38, histidine 39, cysteine 49, cysteine 54, histidine 55, histidine 73, cysteine 83, cysteine 86, histidine 87, cysteine 104, cysteine 109, and histidine 110.

Heme is required as a cofactor.

Its function is as follows. Participates in sulfate respiration coupled with phosphorylation by transferring electrons from the enzyme dehydrogenase to ferredoxin. This Megalodesulfovibrio gigas (strain ATCC 19364 / DSM 1382 / NCIMB 9332 / VKM B-1759) (Desulfovibrio gigas) protein is Cytochrome c3.